The following is a 197-amino-acid chain: Protein GrpE (197 aa).

Positions methionine 1–arginine 40 are disordered.

The protein belongs to the GrpE family. As to quaternary structure, homodimer.

It is found in the cytoplasm. In terms of biological role, participates actively in the response to hyperosmotic and heat shock by preventing the aggregation of stress-denatured proteins, in association with DnaK and GrpE. It is the nucleotide exchange factor for DnaK and may function as a thermosensor. Unfolded proteins bind initially to DnaJ; upon interaction with the DnaJ-bound protein, DnaK hydrolyzes its bound ATP, resulting in the formation of a stable complex. GrpE releases ADP from DnaK; ATP binding to DnaK triggers the release of the substrate protein, thus completing the reaction cycle. Several rounds of ATP-dependent interactions between DnaJ, DnaK and GrpE are required for fully efficient folding. This is Protein GrpE from Escherichia coli (strain K12 / DH10B).